We begin with the raw amino-acid sequence, 162 residues long: Cyclic pyranopterin monophosphate synthase (162 aa).

Substrate contacts are provided by residues 75-77 (MCH) and 116-117 (ME). Residue aspartate 131 is part of the active site.

It belongs to the MoaC family. In terms of assembly, homohexamer; trimer of dimers.

The catalysed reaction is (8S)-3',8-cyclo-7,8-dihydroguanosine 5'-triphosphate = cyclic pyranopterin phosphate + diphosphate. It functions in the pathway cofactor biosynthesis; molybdopterin biosynthesis. In terms of biological role, catalyzes the conversion of (8S)-3',8-cyclo-7,8-dihydroguanosine 5'-triphosphate to cyclic pyranopterin monophosphate (cPMP). This chain is Cyclic pyranopterin monophosphate synthase, found in Staphylococcus epidermidis (strain ATCC 35984 / DSM 28319 / BCRC 17069 / CCUG 31568 / BM 3577 / RP62A).